The chain runs to 504 residues: MELLNGTGLWSMAIFTVIFILLVDLMHRRHRWTSRYPPGPVPWPVLGNLLQVDLSNMPYSLYKLQHRYGDVFSLQKGWKPMVIVNRLKAVQEVLVTHGEDTADRPPVPIFKCLGVKPRSQGVILASYGPEWREQRRFSVSTLRTFGMGKKSLEEWVTKEAGHLCDAFTAQAGQSINPKAMLNKALCNVIASLIFARRFEYEDPYLIRMVKLVEESLTEVSGFIPEVLNTFPALLRIPGLADKVFQGQKTFMALLDNLLAENRTTWDPAQPPRNLTDAFLAEVEKAKGNPESSFNDENLRMVVVDLFTAGMVTTATTLTWALLLMILYPDVQRRVQQEIDEVIGQVRCPEMTDQAHMPYTNAVIHEVQRFGDIAPLNLPRFTSCDIEVQDFVIPKGTTLIINLSSVLKDETVWEKPHRFHPEHFLDAQGNFVKHEAFMPFSAGRRACLGEPLARMELFLFFTCLLQRFSFSVPVGQPRPSTHGFFAFPVAPLPYQLCAVVREQGL.

Position 446 (cysteine 446) interacts with heme.

Belongs to the cytochrome P450 family. Heme serves as cofactor.

It is found in the endoplasmic reticulum membrane. Its subcellular location is the microsome membrane. It carries out the reaction an organic molecule + reduced [NADPH--hemoprotein reductase] + O2 = an alcohol + oxidized [NADPH--hemoprotein reductase] + H2O + H(+). Its function is as follows. Cytochromes P450 are a group of heme-thiolate monooxygenases. In liver microsomes, this enzyme is involved in an NADPH-dependent electron transport pathway. It oxidizes a variety of structurally unrelated compounds, including steroids, fatty acids, and xenobiotics. This Rattus norvegicus (Rat) protein is Cytochrome P450 2D1 (Cyp2d1).